Here is a 146-residue protein sequence, read N- to C-terminus: Large ribosomal subunit protein uL15 (146 aa).

The disordered stretch occupies residues 1–51; that stretch reads MKLHELQPAPGSRKKAVRVGRGIGSGNGKTSGRGQKGQNARSGGGVRLGFE. Gly residues-rich tracts occupy residues 21–35 and 42–51; these read RGIG…GRGQ and SGGGVRLGFE.

It belongs to the universal ribosomal protein uL15 family. As to quaternary structure, part of the 50S ribosomal subunit.

Functionally, binds to the 23S rRNA. The sequence is that of Large ribosomal subunit protein uL15 from Geobacillus kaustophilus (strain HTA426).